A 415-amino-acid polypeptide reads, in one-letter code: MIDFLKQLPHLEPYGNPFYFIYLGIALLPIFIGLFFKKRFAIYECLVSITFIVLALTGTHASQILALLFYIVWQIIWVYSYKRYRSQRDNKWVFYLHSFLVVLPLILVKVEPTINGTQSLLNFLGISYLTFRAVGMIIEMRDGVLKEFTLGEFLRFMLFMPTFTSGPIDRFKRFNEDYQSIPNRDELLNMLEQAVKYIMLGFLYKFVLAQIFGSMLLPPLKAQALSQGGIFNLPTLGVMYVYGFDLFFDFAGYSMFALAVSNLMGIKSPINFDKPFISRDMKEFWNRWHMSLSFWFRDFVFMRLVIVLMRNKVFKNRNTTSNVAYIINMMVMGFWHGITWYYIAYGIFHGIGLVINDAWLRKKKTINKDRKKAGLKPLPENKWTKALGIFITFNTVMLSFLIFSGFLNDLWFTKK.

Topologically, residues 1–16 (MIDFLKQLPHLEPYGN) are extracellular. A helical membrane pass occupies residues 17 to 36 (PFYFIYLGIALLPIFIGLFF). Over 37 to 40 (KKRF) the chain is Cytoplasmic. A helical membrane pass occupies residues 41–56 (AIYECLVSITFIVLAL). The Extracellular portion of the chain corresponds to 57 to 60 (TGTH). Residues 61–87 (ASQILALLFYIVWQIIWVYSYKRYRSQ) form a helical membrane-spanning segment. Over 88-90 (RDN) the chain is Cytoplasmic. Residues 91-115 (KWVFYLHSFLVVLPLILVKVEPTIN) traverse the membrane as a helical segment. The Extracellular portion of the chain corresponds to 116-125 (GTQSLLNFLG). A helical transmembrane segment spans residues 126 to 142 (ISYLTFRAVGMIIEMRD). The Cytoplasmic portion of the chain corresponds to 143–149 (GVLKEFT). The stretch at 150 to 179 (LGEFLRFMLFMPTFTSGPIDRFKRFNEDYQ) is an intramembrane region. At 180–183 (SIPN) the chain is on the cytoplasmic side. The chain crosses the membrane as a helical span at residues 184 to 227 (RDELLNMLEQAVKYIMLGFLYKFVLAQIFGSMLLPPLKAQALSQ). Residues 228–232 (GGIFN) are Extracellular-facing. The helical transmembrane segment at 233-264 (LPTLGVMYVYGFDLFFDFAGYSMFALAVSNLM) threads the bilayer. The Cytoplasmic portion of the chain corresponds to 265–274 (GIKSPINFDK). The stretch at 275 to 311 (PFISRDMKEFWNRWHMSLSFWFRDFVFMRLVIVLMRN) is an intramembrane region. At 312-316 (KVFKN) the chain is on the cytoplasmic side. The helical transmembrane segment at 317–336 (RNTTSNVAYIINMMVMGFWH) threads the bilayer. Residue His-336 is part of the active site. Over 337-339 (GIT) the chain is Extracellular. Residues 340–373 (WYYIAYGIFHGIGLVINDAWLRKKKTINKDRKKA) traverse the membrane as a helical segment. Over 374–381 (GLKPLPEN) the chain is Cytoplasmic. Residues 382-404 (KWTKALGIFITFNTVMLSFLIFS) form a helical membrane-spanning segment. The Extracellular segment spans residues 405–415 (GFLNDLWFTKK).

This sequence belongs to the membrane-bound acyltransferase family.

It localises to the cell membrane. The protein operates within cell wall biogenesis; lipoteichoic acid biosynthesis. Its function is as follows. O-acyltransferase that catalyzes D-alanylation of both teichoic acid and lipoteichoic acid (LTA). D-alanylation of LTA plays an important role in modulating the properties of the cell wall in Gram-positive bacteria, influencing the net charge of the cell wall. Catalyzes D-alanylation from DltC carrier protein. This chain is Teichoic acid D-alanyltransferase, found in Streptococcus thermophilus (strain ATCC BAA-250 / LMG 18311).